Consider the following 387-residue polypeptide: Acetylajmalan esterase (387 aa).

An N-terminal signal peptide occupies residues M1–G22. The Nucleophile role is filled by S36. N98, N180, N199, N249, and N296 each carry an N-linked (GlcNAc...) asparagine glycan. Residues D337 and H340 contribute to the active site.

It belongs to the 'GDSL' lipolytic enzyme family.

The enzyme catalyses 17-O-acetylajmaline + H2O = ajmaline + acetate + H(+). The catalysed reaction is 17-O-acetylnorajmaline + H2O = norajmaline + acetate + H(+). Its pathway is alkaloid biosynthesis; ajmaline biosynthesis. Its function is as follows. Acetylesterase involved in the biosynthesis of ajmaline-type monoterpenoid indole alkaloids (MIAs) natural products, important plant-derived pharmaceuticals used in the therapy of heart disorders. Deacetylates 17-O-acetylajmaline and 17-O-acetylnorajmaline to produce ajmaline and norajmaline, but is inactive toward other acetylated alkaloids. This Rauvolfia serpentina (Serpentine wood) protein is Acetylajmalan esterase.